The following is a 249-amino-acid chain: Neurotrophic factor BDNF precursor form (249 aa).

Residues 1–18 (MTILFLTMVISYFGCMKA) form the signal peptide. The propeptide occupies 19–130 (APMKEANVHG…AANMSMRVRR (112 aa)). N-linked (GlcNAc...) asparagine glycosylation occurs at N123. Intrachain disulfides connect C143–C210, C188–C239, and C198–C241.

The protein belongs to the NGF-beta family. Monomers and homodimers. Binds to NTRK2/TRKB. Can form heterodimers with other neurotrophin family members, such as NTF3 and NTF4 (in vitro), but the physiological relevance of this is not clear. BDNF precursor form: interacts with the heterodimer formed by NGFR and SORCS2. Mature BDNF has much lower affinity for the heterodimer formed by NGFR and SORCS2. N-glycosylated and glycosulfated, contrary to mature BDNF. Post-translationally, mature BDNF is produced by proteolytic removal of the propeptide, catalyzed by a FURIN family member. In addition, the precursor form is proteolytically cleaved within the propeptide, but this is not an obligatory intermediate for the production of mature BDNF. Can be converted into mature BDNF by plasmin (PLG).

It localises to the secreted. In terms of biological role, important signaling molecule that activates signaling cascades downstream of NTRK2. During development, promotes the survival and differentiation of selected neuronal populations of the peripheral and central nervous systems. Participates in axonal growth, pathfinding and in the modulation of dendritic growth and morphology. Major regulator of synaptic transmission and plasticity at adult synapses in many regions of the CNS. The versatility of BDNF is emphasized by its contribution to a range of adaptive neuronal responses including long-term potentiation (LTP), long-term depression (LTD), certain forms of short-term synaptic plasticity, as well as homeostatic regulation of intrinsic neuronal excitability. Important signaling molecule that activates signaling cascades downstream of NTRK2. Activates signaling cascades via the heterodimeric receptor formed by NGFR and SORCS2. Signaling via NGFR and SORCS2 plays a role in synaptic plasticity and long-term depression (LTD). Binding to NGFR and SORCS2 promotes neuronal apoptosis. Promotes neuronal growth cone collapse. The protein is Neurotrophic factor BDNF precursor form (Bdnf) of Rattus norvegicus (Rat).